The following is a 197-amino-acid chain: Protein Hikeshi (197 aa).

Residues 18 to 55 (VAEDKFVFDLPDYENINHVVVFMLGTIPFPEGMGGSVY) are required for F-X-F-G repeats-nucleoporins recognition and nuclear import. Residues 124 to 134 (QTPVGSAAVSS) form a flexible linker region involved in nuclear import of HSP70 proteins region.

The protein belongs to the OPI10 family. As to quaternary structure, forms an asymmetric homodimer; required for binding and nuclear import of HSP70 proteins. Interacts with ATP-bound HSP70 proteins. Interacts with NUP62 and NUP153 (via F-X-F-G repeats). Interacts with HSPA8. In terms of tissue distribution, expressed in the central white matter of newborn and adult brain, particularly in regions where oligodendrocytes are generated.

The protein localises to the cytoplasm. The protein resides in the cytosol. It is found in the nucleus. Functionally, acts as a specific nuclear import carrier for HSP70 proteins following heat-shock stress: acts by mediating the nucleoporin-dependent translocation of ATP-bound HSP70 proteins into the nucleus. HSP70 proteins import is required to protect cells from heat shock damages. Does not translocate ADP-bound HSP70 proteins into the nucleus. May also be indirectly required for organization and/or function of the secretory apparatus in Club cells in lung. The protein is Protein Hikeshi of Mus musculus (Mouse).